Reading from the N-terminus, the 106-residue chain is UPF0145 protein BF0270 (106 aa).

Belongs to the UPF0145 family.

The polypeptide is UPF0145 protein BF0270 (Bacteroides fragilis (strain YCH46)).